A 299-amino-acid chain; its full sequence is Tyrosine recombinase XerC (299 aa).

The 85-residue stretch at 1–85 (MERQLEAYCA…AVRGLYRYLN (85 aa)) folds into the Core-binding (CB) domain. One can recognise a Tyr recombinase domain in the interval 106 to 285 (RLPKVLDTDR…DFQHLAAVYD (180 aa)). Residues Arg146, Lys170, His237, Arg240, and His263 contribute to the active site. Tyr272 serves as the catalytic O-(3'-phospho-DNA)-tyrosine intermediate.

It belongs to the 'phage' integrase family. XerC subfamily. Forms a cyclic heterotetrameric complex composed of two molecules of XerC and two molecules of XerD.

The protein resides in the cytoplasm. Its function is as follows. Site-specific tyrosine recombinase, which acts by catalyzing the cutting and rejoining of the recombining DNA molecules. The XerC-XerD complex is essential to convert dimers of the bacterial chromosome into monomers to permit their segregation at cell division. It also contributes to the segregational stability of plasmids. This Pseudomonas putida (strain W619) protein is Tyrosine recombinase XerC.